The following is a 72-amino-acid chain: Hirudin variant-2 (72 aa).

An N-terminal signal peptide occupies residues 1-7 (AICVSQA). The interval 8-10 (ITY) is interaction with thrombin active site. Disulfide bonds link C13/C21, C23/C35, and C29/C46. The interval 47 to 72 (VTGEGTPNPESHNNGDFEEIPEEYLQ) is disordered. T52 carries O-linked (GalNAc...) threonine glycosylation. An interaction with fibrinogen-binding exosite of thrombin region spans residues 62 to 72 (DFEEIPEEYLQ). Over residues 62 to 72 (DFEEIPEEYLQ) the composition is skewed to acidic residues. Y70 carries the post-translational modification Sulfotyrosine.

It belongs to the protease inhibitor I14 (hirudin) family.

It is found in the secreted. Functionally, hirudin is a potent thrombin-specific protease inhibitor. It forms a stable non-covalent complex with alpha-thrombin, thereby abolishing its ability to cleave fibrinogen. In Hirudo medicinalis (Medicinal leech), this protein is Hirudin variant-2.